Consider the following 80-residue polypeptide: Small ribosomal subunit protein bS16 (80 aa).

Belongs to the bacterial ribosomal protein bS16 family.

The chain is Small ribosomal subunit protein bS16 from Wigglesworthia glossinidia brevipalpis.